The sequence spans 912 residues: Phosphatidylinositol-3-phosphatase SAC1 (912 aa).

Residues Met-1 to Pro-29 form a disordered region. In terms of domain architecture, SAC spans Leu-173 to Gly-575. The Phosphatase catalytic core signature appears at Arg-511–Asn-522. Residues Arg-715–Ile-912 form a required for subcellular localization region. The tract at residues Leu-740–Ser-766 is disordered.

Component of the PI(3,5)P2 regulatory complex at least composed of ATG18, SAC/FIG4, FAB1 and VAC14. The cofactor is Mg(2+). In terms of tissue distribution, ubiquitous with higher expression level in both young elongating and nonelongating stems. Detected in vascular tissues.

The protein resides in the vacuole membrane. It is found in the golgi apparatus. The enzyme catalyses a 1,2-diacyl-sn-glycero-3-phospho-(1D-myo-inositol-3-phosphate) + H2O = a 1,2-diacyl-sn-glycero-3-phospho-(1D-myo-inositol) + phosphate. The catalysed reaction is a 1,2-diacyl-sn-glycero-3-phospho-(1D-myo-inositol-3,5-bisphosphate) + H2O = a 1,2-diacyl-sn-glycero-3-phospho-(1D-myo-inositol-3-phosphate) + phosphate. It catalyses the reaction a 1,2-diacyl-sn-glycero-3-phospho-(1D-myo-inositol 4-phosphate) + H2O = a 1,2-diacyl-sn-glycero-3-phospho-(1D-myo-inositol) + phosphate. Phosphoinositide phosphatase which catalyzes the hydrolysis of phosphatidylinositol-3,5-bisphosphate (PtdIns(3,5)P2). Can also catalyze the hydrolysis of phosphatidylinositol 3-phosphate (PtdIns(3)P) and phosphatidylinositol 4-phosphate (PtdIns(4)P). Required for normal cell morphogenesis, cell wall synthesis, and actin organization. This is Phosphatidylinositol-3-phosphatase SAC1 (SAC1) from Arabidopsis thaliana (Mouse-ear cress).